We begin with the raw amino-acid sequence, 120 residues long: Large ribosomal subunit protein uL18 (120 aa).

This sequence belongs to the universal ribosomal protein uL18 family. As to quaternary structure, part of the 50S ribosomal subunit; part of the 5S rRNA/L5/L18/L25 subcomplex. Contacts the 5S and 23S rRNAs.

In terms of biological role, this is one of the proteins that bind and probably mediate the attachment of the 5S RNA into the large ribosomal subunit, where it forms part of the central protuberance. This chain is Large ribosomal subunit protein uL18, found in Methylorubrum extorquens (strain CM4 / NCIMB 13688) (Methylobacterium extorquens).